Here is a 65-residue protein sequence, read N- to C-terminus: Alpha-toxin Lqq4 (65 aa).

One can recognise an LCN-type CS-alpha/beta domain in the interval 3 to 65 (RDAYIADDKN…VPIRIPGKCR (63 aa)). A specificity module, loop 1 region spans residues 9-13 (DDKNC). Disulfide bonds link Cys13/Cys64, Cys17/Cys37, Cys23/Cys47, and Cys27/Cys49. Specificity module, loop stretches follow at residues 40-44 (LGKYG) and 57-65 (PIRIPGKCR). Arg65 is subject to Arginine amide.

The protein belongs to the long (4 C-C) scorpion toxin superfamily. Sodium channel inhibitor family. Alpha subfamily. Post-translationally, the recombinant toxin which is used for activity tests is not amidated. However, C-terminal amidation does not appear to play an important role in activity, since the non-amidated recombinant toxin and the native toxin (which is amidated) show similar activities on all sodium channels tested. As to expression, expressed by the venom gland.

The protein localises to the secreted. Its function is as follows. Alpha toxins bind voltage-independently at site-3 of sodium channels (Nav) and inhibit the inactivation of the activated channels, thereby blocking neuronal transmission. Both native and recombinant (non-amidated) toxins inhibit inactivation of Nav1.2/SCN2A (EC(50)=31.2-36.6 nM), Nav1.6/SCN8A (EC(50)=6.9-8.9 nM), and Nav1.7/SCN9A (EC(50)=182.0-260.1 nM). This chain is Alpha-toxin Lqq4, found in Leiurus quinquestriatus quinquestriatus (Egyptian scorpion).